The primary structure comprises 69 residues: Neurotoxin Cex3 (69 aa).

Alanine 1 is a signal peptide. The LCN-type CS-alpha/beta domain occupies 2-67 (KDGYLVNKST…TYPLPNKSCG (66 aa)). 4 cysteine pairs are disulfide-bonded: cysteine 13–cysteine 66, cysteine 17–cysteine 42, cysteine 26–cysteine 47, and cysteine 30–cysteine 49. Cysteine amide is present on cysteine 66. Positions 67–69 (GRK) are excised as a propeptide.

This sequence belongs to the long (4 C-C) scorpion toxin superfamily. Sodium channel inhibitor family. Beta subfamily. Expressed by the venom gland.

It localises to the secreted. In terms of biological role, beta toxins bind voltage-independently at site-4 of sodium channels (Nav) and shift the voltage of activation toward more negative potentials thereby affecting sodium channel activation and promoting spontaneous and repetitive firing. The chain is Neurotoxin Cex3 from Centruroides exilicauda (Bark scorpion).